The primary structure comprises 280 residues: Vitamin B12-binding protein (280 aa).

The first 27 residues, 1 to 27 (MMPLGLFPLPRAAVVLLISLLTLPAQA), serve as a signal peptide directing secretion. Residues 30–277 (RVISLSPSTT…QMASIPTPVA (248 aa)) form the Fe/B12 periplasmic-binding domain. Tyr-57 contacts cyanocob(III)alamin. A disulfide bond links Cys-190 and Cys-266.

The protein belongs to the BtuF family. As to quaternary structure, the complex is composed of two ATP-binding proteins (BtuD), two transmembrane proteins (BtuC) and a solute-binding protein (BtuF).

The protein resides in the periplasm. Functionally, part of the ABC transporter complex BtuCDF involved in vitamin B12 import. Binds vitamin B12 and delivers it to the periplasmic surface of BtuC. In Yersinia pseudotuberculosis serotype O:1b (strain IP 31758), this protein is Vitamin B12-binding protein.